The chain runs to 539 residues: Chaperonin GroEL 1 (539 aa).

ATP contacts are provided by residues Thr-29–Pro-32, Asp-86–Thr-90, Gly-413, and Asp-493.

It belongs to the chaperonin (HSP60) family. Forms a cylinder of 14 subunits composed of two heptameric rings stacked back-to-back. Interacts with the co-chaperonin GroES.

It is found in the cytoplasm. It catalyses the reaction ATP + H2O + a folded polypeptide = ADP + phosphate + an unfolded polypeptide.. Its function is as follows. Together with its co-chaperonin GroES, plays an essential role in assisting protein folding. The GroEL-GroES system forms a nano-cage that allows encapsulation of the non-native substrate proteins and provides a physical environment optimized to promote and accelerate protein folding. In Acidothermus cellulolyticus (strain ATCC 43068 / DSM 8971 / 11B), this protein is Chaperonin GroEL 1.